We begin with the raw amino-acid sequence, 82 residues long: MDSIISAASVIAAGLAVGLAAIGPGIGQGSAAANAVEGIARQPEVEGKIRGTLLLSLAFMESLTIYGLVVALSLLFANPYTG.

2 consecutive transmembrane segments (helical) span residues 4–24 (IISA…AIGP) and 57–77 (LAFM…LLFA).

It belongs to the ATPase C chain family. As to quaternary structure, F-type ATPases have 2 components, F(1) - the catalytic core - and F(0) - the membrane proton channel. F(1) has five subunits: alpha(3), beta(3), gamma(1), delta(1), epsilon(1). F(0) has four main subunits: a(1), b(1), b'(1) and c(10-14). The alpha and beta chains form an alternating ring which encloses part of the gamma chain. F(1) is attached to F(0) by a central stalk formed by the gamma and epsilon chains, while a peripheral stalk is formed by the delta, b and b' chains.

It is found in the plastid. The protein resides in the chloroplast thylakoid membrane. Functionally, f(1)F(0) ATP synthase produces ATP from ADP in the presence of a proton or sodium gradient. F-type ATPases consist of two structural domains, F(1) containing the extramembraneous catalytic core and F(0) containing the membrane proton channel, linked together by a central stalk and a peripheral stalk. During catalysis, ATP synthesis in the catalytic domain of F(1) is coupled via a rotary mechanism of the central stalk subunits to proton translocation. In terms of biological role, key component of the F(0) channel; it plays a direct role in translocation across the membrane. A homomeric c-ring of between 10-14 subunits forms the central stalk rotor element with the F(1) delta and epsilon subunits. The protein is ATP synthase subunit c, chloroplastic of Antithamnion sp. (Red alga).